A 758-amino-acid polypeptide reads, in one-letter code: MTILNHTLGFPRVGLKRELKKAQESYWAGNSTQEELLNVGRELRARHWQQQQQAGVDLVPVGDFAWYDHVLTTSLLLGNVPERHQNADGSIDLDTLFRIGRGRAPTGTPAAAAEMTKWFNTNYHYMVPEFQQGQQFKLGWTQLLDEVDEALALGHKIKPVLLGPVTYLWLGKVKGEQFDRLSLLKDILPVYQQVLGELAKRGIEWVQIDEPALVLELPPEWLDAYQPAYQALQGQVKLLLTTYFDSIGHNLDTIRALPVQGLHVDVVAGQDDIAKLNAKLPQEWLLSLGVINGRNVWRADLSHWFERLQPLVNSRPLWLGSSCSLLHSPIDLSEETRLDAEVKSWFAFALQKCAELALLTQALNAPSEAKLAELAAYSAPIRARRASSRVHNPQVEQRLAAITAQDIERQQPYEARAAAQRKRFNLPAWPTTTIGSFPQTTEIRGLRLDFKQGRLDGKNYRTGISEHIKQAIAEQERLGLDVLVHGEAERNDMVEYFGEHLDGFVFTQNGWVQSYGSRCVKPPVIIGDISRPEAITVEWAKYAQSLTDKPVKGMLTGPVTILCWSFPREDVSRETIAKQIALALRDEVEDLEKAGIGIIQIDEPALREGLPLRRADWQAYLQWAVDAFKLNAAVAQNDTQIHTHMCYCEFNDIMDSIAALDADVITIETSRSDMELLESFEDFAYPNEIGPGVYDIHSPNVPSVEWIEALLRKAAQRIPAERLWVNPDCGLKTRGWPETRQALANMVLAAQRLREEQV.

Residues 17–20 (RELK) and lysine 117 contribute to the 5-methyltetrahydropteroyltri-L-glutamate site. Residues 434 to 436 (IGS) and glutamate 487 contribute to the L-homocysteine site. Residues 434–436 (IGS) and glutamate 487 contribute to the L-methionine site. Residues 518 to 519 (RC) and tryptophan 564 each bind 5-methyltetrahydropteroyltri-L-glutamate. Aspartate 602 contributes to the L-homocysteine binding site. Aspartate 602 contacts L-methionine. Position 608 (glutamate 608) interacts with 5-methyltetrahydropteroyltri-L-glutamate. Residues histidine 644, cysteine 646, and glutamate 668 each contribute to the Zn(2+) site. Histidine 697 serves as the catalytic Proton donor. Position 729 (cysteine 729) interacts with Zn(2+).

The protein belongs to the vitamin-B12 independent methionine synthase family. The cofactor is Zn(2+).

The enzyme catalyses 5-methyltetrahydropteroyltri-L-glutamate + L-homocysteine = tetrahydropteroyltri-L-glutamate + L-methionine. The protein operates within amino-acid biosynthesis; L-methionine biosynthesis via de novo pathway; L-methionine from L-homocysteine (MetE route): step 1/1. In terms of biological role, catalyzes the transfer of a methyl group from 5-methyltetrahydrofolate to homocysteine resulting in methionine formation. This chain is 5-methyltetrahydropteroyltriglutamate--homocysteine methyltransferase, found in Yersinia enterocolitica serotype O:8 / biotype 1B (strain NCTC 13174 / 8081).